A 1288-amino-acid chain; its full sequence is MGCTPSHSDLVNSVAKSGIQFLKKPKAIRPGCQGGSERGSIPLLVKNSTCYDAGEGLAEEQPSPRRNQTTAKGLCQLMGDPASGKRKDMEGLIPGTKTSSSQLNKSQSHMAKDIPFKTQGSHGSQGADFSGDESEESSTQDTSKWKRTAKCHTSSTQSHCYQTIHPAHEPEGKVDFPEPLVKAHQQAYTYLHSSLSKYEAILCIIHQATQTRELLQPMVSFLLLCFEEISQLLGEISKDGEVLLQEVREDLAWPLKKREPQEQPNLLQQLLQYTVSKLQVLNGTVASLTGSFLEGSSSYLHSTATHLENKLSTKRNVDERLLRALRQLESLASGCGDPGVQGLPLCSEDSGIGADNESVQSVDKLGKQTSWDLAPEPEEWKSVTSPHTEARQSGHTWQQSPFCLGSGRPQDCLLSGAPMAKVQPRAQDEARSPCLSSTSPENITSPPLKLGTSTPCDSFGIGVSVEPHLSKTSRPMDASSLSDSEDSSPEEEEEDKMSSMSLCAWQEKTPHSRPQSSPADRESPFQARTRRLRSLQAQEMILKMKESISERIKFVPVPCGHQDWSEEEEGRTVVPPRPSTVSGSRRAPERQTRSQSESCLQSHVEDPTFQELRRVQRDLSQKLEAFYALGAKGQGQSQEQILQPRAAAVWPNGTCRVSPSNTTSRLKASLTKNFSILPSQDKSILQKCNPHPEDEQGKAGKLPNAIPSGEVSEAAKATDWNVRGCPTRTSVKKLIETFSPTESLRMLGDSKDAGASPCLRNCIMPPRFPKYTGLAPLYPKPQISPASGRESLKMGIGWKPLAPIFPPLPKAEAAKSEELSCEMEGNLEHLPPPPMEVLMDKSFASLESPESSKSTENSPKETQEPGPGEAGPTRRTWASPKLRASVSPLDLLPSKSTASLTKPHSTGPGSGRSSCQPRKPALDLSSPPATSQSPEVKGGTWSQAEKATSLYRQPRKAIAWHHSGPPSGQNRTSESSLARPRQSRERSPPVGRKASPTRTHWVPQADKRRRSLPSSYRPAQPSPSAVQTPPSPPVSPRVLSPPTTKRRTSPPHQPKLPNPPPESAPAQCKVPSPPTQHPEASPPFSIPSPSPPMSPSQEHKETRDSEDSQAVIAKVSGNTHSIFCPATSSLFEAKPPLSTAHPLTPPSLPPEAGGPLGNPAECWKNSSGPWLRADSQRRAALCALNPLPFLRRTASDRQPGGRPQPPTLDPTSTSYESQLGQNSSSEESPKKDTEPGSSPCSPELQGGTRRASPPEFCVLGHGLQPEPRTGHIQDKSQPEAQPQQEEVS.

Gly2 carries N-myristoyl glycine lipidation. Cys3 is lipidated: S-palmitoyl cysteine. 9 disordered regions span residues 78–147 (MGDP…KWKR), 368–401 (QTSW…QQSP), 423–453 (QPRA…LGTS), 467–527 (PHLS…PFQA), 563–605 (DWSE…SHVE), 686–707 (QKCN…NAIP), 813–1109 (AAKS…EDSQ), 1132–1169 (EAKP…SSGP), and 1190–1288 (LRRT…EEVS). Polar residues-rich tracts occupy residues 96 to 109 (TKTS…SQSH), 382 to 401 (SVTS…QQSP), and 434 to 453 (CLSS…LGTS). Positions 483–495 (DSEDSSPEEEEED) are enriched in acidic residues. 4 stretches are compositionally biased toward polar residues: residues 848–857 (SPESSKSTEN), 894–904 (SKSTASLTKPH), 927–946 (PPAT…QAEK), and 966–976 (PSGQNRTSESS). Over residues 1018-1028 (PAQPSPSAVQT) the composition is skewed to low complexity. 2 stretches are compositionally biased toward pro residues: residues 1051 to 1063 (PHQP…PPES) and 1071 to 1094 (PSPP…PPMS). Over residues 1097-1106 (QEHKETRDSE) the composition is skewed to basic and acidic residues. The segment covering 1209-1226 (DPTSTSYESQLGQNSSSE) has biased composition (polar residues). The segment covering 1268-1277 (RTGHIQDKSQ) has biased composition (basic and acidic residues). Over residues 1278 to 1288 (PEAQPQQEEVS) the composition is skewed to polar residues.

As to expression, specifically expressed in retina.

The protein localises to the cell projection. It is found in the cilium. Its subcellular location is the photoreceptor outer segment. It localises to the photoreceptor inner segment. In terms of biological role, plays an essential role for normal photoreceptor cell maintenance and vision. In Homo sapiens (Human), this protein is Photoreceptor cilium actin regulator.